The sequence spans 524 residues: Probable malate:quinone oxidoreductase (524 aa).

It belongs to the MQO family. FAD is required as a cofactor.

The catalysed reaction is (S)-malate + a quinone = a quinol + oxaloacetate. It participates in carbohydrate metabolism; tricarboxylic acid cycle; oxaloacetate from (S)-malate (quinone route): step 1/1. The polypeptide is Probable malate:quinone oxidoreductase (Blochmanniella floridana).